The chain runs to 463 residues: Glutamate--tRNA ligase 2 (463 aa).

A 'HIGH' region motif is present at residues 11–21 (PSPTGYLHIGG). The 'KMSKS' region signature appears at 240-244 (KLSKR). Lys-243 contacts ATP.

This sequence belongs to the class-I aminoacyl-tRNA synthetase family. Glutamate--tRNA ligase type 1 subfamily. In terms of assembly, monomer.

It is found in the cytoplasm. It carries out the reaction tRNA(Glu) + L-glutamate + ATP = L-glutamyl-tRNA(Glu) + AMP + diphosphate. Catalyzes the attachment of glutamate to tRNA(Glu) in a two-step reaction: glutamate is first activated by ATP to form Glu-AMP and then transferred to the acceptor end of tRNA(Glu). The polypeptide is Glutamate--tRNA ligase 2 (Campylobacter jejuni subsp. jejuni serotype O:6 (strain 81116 / NCTC 11828)).